Reading from the N-terminus, the 1138-residue chain is MNLNNLGGYEDSNRTLNNSLNYPTQKALSPSLKNMNYQDFLSITEREQPEALASGNTAINTVVSVTGATLSALGVPGASFITNFYLKITGLLWPHDKNIWDEFMTEVETLIEQKIEQYARNKALAELEGLGNNLTIYQQALEDWLNNPDDPATITRVIDRFRILDALFESYMPSFRVAGYEIPLLTVYAQAANLHLALLRDSTLYGDKWEFTQNNIEENYNRQKKHISEYSNHCVKWYNSGLSRLNGSTYEQWINYNRFRREMILMVLDIAAVFPIYDPRMYSMETSTQLTREVYTDPISLSISNPGIGPSFSQMENTAIRTPHLVDYLDELYIYTSKYKAFSHEIQPDLFYWSAHKVSFKQSEQSNLYTTGIYGKTSGYISSGAYSFRGNDIYRTLAAPSVVVYPYTQNYGVEQVEFYGVKGHVHYRGDNKYDLTYDSIDQLPPDGEPIHEKYTHRLCHATAISKSTPDYDNATIPIFSWTHRSAEYYNRIYPNKITKIPAVKMYKLGDTSTVVKGPGFTGGDLVKRGSNGYIGDIKATVNSPLSQNYRVRVRYATNVSGQFNVYINDKITLQRKFQNTVETIGEGKDLTYGSFGYIEYSTTIQFPDKHPKITLHLSDLSNNSSFYVDSIEFIPVDVNYDEKEKLEKAQKAVNTLFTEGRNALQKDVTDYKVDQVSILVDCISGDLYPNEKRELQNLVKYAKRLSYSRNLLLDPTFDSINSSEENGWYGSNGIVIGNGDFVFKGNYLIFSGTNDTQYPTYLYQKIDESKLKEYTRYKLKGFIESSQDLEAYVIRYDAKHRTLDVSDNLLPDILPENTCGEPNRCAAQQYLDENPSSECSSMQDGILSDSHSFSLNIDIGSINHNENLGIWVLFKISTLEGYAKFGNLEVIEDGPVIGEALARVKRQETKWRNKLAQLTTETQAIYTRAKQALDNLFANAQDSHLKIDVTFAEIAAARKIVQSIREAYMSWLSVVPGVNHPIFTELSERVQRAFQLYDVRNVVRNGRFLNGLSDWIVTSDVKVQEENGNNVLVLNNWDAQVLQNVKLYQDRGYILRVTARKIGIGEGYITITDEEGHTVQLRFTACEVIDASNAFISGYITKELEFFPDTEKVHIEIGETEGIFLVESIELFLMEELC.

This sequence belongs to the delta endotoxin family.

In terms of biological role, promotes colloidosmotic lysis by binding to the midgut epithelial cells of Coleoptera. The protein is Pesticidal crystal protein Cry7Ab (cry7Ab) of Bacillus thuringiensis serovar kumamotoensis.